The following is a 143-amino-acid chain: Hemoglobin subunit alpha (143 aa).

Ser-1 carries the N-acetylserine modification. A Globin domain is found at 1–143 (SLSATDKARV…LALALSEKYR (143 aa)). His-60 is a binding site for O2. His-89 lines the heme b pocket.

It belongs to the globin family. As to quaternary structure, heterotetramer of two alpha chains and two beta chains. Red blood cells.

Involved in oxygen transport from gills to the various peripheral tissues. This is Hemoglobin subunit alpha (hba) from Leiostomus xanthurus (Spot).